Reading from the N-terminus, the 109-residue chain is Mitochondrial import receptor subunit TOM22 homolog (109 aa).

Over 1 to 60 (MALVRDDFDDIPDSEIHETIVERIEGLGEMFPDALRSAVHSTVDWSIWGVKGVFSLTKST) the chain is Cytoplasmic. The chain crosses the membrane as a helical span at residues 61–77 (IWVVSTTSLIAFLPYII). At 78–109 (EKERSDLEKTQVAQQRQMLLGPSAAIQQAKTA) the chain is on the mitochondrial intermembrane side.

This sequence belongs to the Tom22 family. As to quaternary structure, forms part of the preprotein translocase complex of the outer mitochondrial membrane (TOM complex).

It is found in the mitochondrion outer membrane. Central receptor component of the translocase of the outer membrane of mitochondria (TOM complex) responsible for the recognition and translocation of cytosolically synthesized mitochondrial preproteins. Together with the peripheral receptor tomm-20 functions as the transit peptide receptor and facilitates the movement of preproteins into the translocation pore. This is Mitochondrial import receptor subunit TOM22 homolog from Caenorhabditis elegans.